A 193-amino-acid chain; its full sequence is Interferon type A3 (193 aa).

The signal sequence occupies residues 1–31 (MAVPASPQHPRGYGILLLTLLLKALATTASA). Intrachain disulfides connect C32/C129, C61/C155, and C68/C168. Residues N65, N71, N108, and N186 are each glycosylated (N-linked (GlcNAc...) asparagine).

This sequence belongs to the alpha/beta interferon family.

The protein localises to the secreted. In terms of biological role, has antiviral activities. The protein is Interferon type A3 (IFNA3) of Gallus gallus (Chicken).